The sequence spans 55 residues: ATP synthase F(0) complex subunit 8 (55 aa).

Residues 8 to 24 (PWFSIMVMTWLTLALLI) form a helical membrane-spanning segment. Residues 35–55 (NPPSKKPSLITKPTPWAWPWT) form a disordered region.

The protein belongs to the ATPase protein 8 family. As to quaternary structure, component of the ATP synthase complex composed at least of ATP5F1A/subunit alpha, ATP5F1B/subunit beta, ATP5MC1/subunit c (homooctomer), MT-ATP6/subunit a, MT-ATP8/subunit 8, ATP5ME/subunit e, ATP5MF/subunit f, ATP5MG/subunit g, ATP5MK/subunit k, ATP5MJ/subunit j, ATP5F1C/subunit gamma, ATP5F1D/subunit delta, ATP5F1E/subunit epsilon, ATP5PF/subunit F6, ATP5PB/subunit b, ATP5PD/subunit d, ATP5PO/subunit OSCP. ATP synthase complex consists of a soluble F(1) head domain (subunits alpha(3) and beta(3)) - the catalytic core - and a membrane F(0) domain - the membrane proton channel (subunits c, a, 8, e, f, g, k and j). These two domains are linked by a central stalk (subunits gamma, delta, and epsilon) rotating inside the F1 region and a stationary peripheral stalk (subunits F6, b, d, and OSCP).

The protein resides in the mitochondrion membrane. In terms of biological role, subunit 8, of the mitochondrial membrane ATP synthase complex (F(1)F(0) ATP synthase or Complex V) that produces ATP from ADP in the presence of a proton gradient across the membrane which is generated by electron transport complexes of the respiratory chain. ATP synthase complex consist of a soluble F(1) head domain - the catalytic core - and a membrane F(1) domain - the membrane proton channel. These two domains are linked by a central stalk rotating inside the F(1) region and a stationary peripheral stalk. During catalysis, ATP synthesis in the catalytic domain of F(1) is coupled via a rotary mechanism of the central stalk subunits to proton translocation. In vivo, can only synthesize ATP although its ATP hydrolase activity can be activated artificially in vitro. Part of the complex F(0) domain. This Anas platyrhynchos (Mallard) protein is ATP synthase F(0) complex subunit 8.